A 231-amino-acid chain; its full sequence is 7-cyano-7-deazaguanine synthase (231 aa).

8 to 18 (FSGGQDSTTCL) contacts ATP. Zn(2+)-binding residues include cysteine 188, cysteine 197, cysteine 200, and cysteine 203.

Belongs to the QueC family. The cofactor is Zn(2+).

It catalyses the reaction 7-carboxy-7-deazaguanine + NH4(+) + ATP = 7-cyano-7-deazaguanine + ADP + phosphate + H2O + H(+). It functions in the pathway purine metabolism; 7-cyano-7-deazaguanine biosynthesis. In terms of biological role, catalyzes the ATP-dependent conversion of 7-carboxy-7-deazaguanine (CDG) to 7-cyano-7-deazaguanine (preQ(0)). The polypeptide is 7-cyano-7-deazaguanine synthase (Salmonella arizonae (strain ATCC BAA-731 / CDC346-86 / RSK2980)).